A 149-amino-acid chain; its full sequence is Calmodulin (149 aa).

A2 is modified (N-acetylalanine). 4 EF-hand domains span residues 8-43 (DQISEFKEAFSLFDKDGDGCITTKELGTVMRSLGQN), 44-79 (PTEAELQDMINEVDADGNGTIDFPEFLNLMARKMKD), 81-116 (DSEEELKEAFRVFDKDQNGFISAAELRHVMTNLGEK), and 117-149 (LTDEEVDEMIREADVDGDGQINYDEFVKVMMAK). Ca(2+) is bound by residues D21, D23, D25, C27, E32, D57, D59, N61, T63, E68, D94, D96, N98, and E105. Residue K116 is modified to N6,N6,N6-trimethyllysine. Ca(2+) is bound by residues D130, D132, D134, Q136, and E141.

It belongs to the calmodulin family.

Its function is as follows. Calmodulin mediates the control of a large number of enzymes, ion channels and other proteins by Ca(2+). Among the enzymes to be stimulated by the calmodulin-Ca(2+) complex are a number of protein kinases and phosphatases. This Capsicum annuum (Capsicum pepper) protein is Calmodulin (CCM1).